A 121-amino-acid chain; its full sequence is Nitrogenase-stabilizing/protective protein NifW (121 aa).

The protein belongs to the NifW family. Homotrimer; associates with NifD.

Functionally, may protect the nitrogenase Fe-Mo protein from oxidative damage. In Synechococcus sp. (strain JA-2-3B'a(2-13)) (Cyanobacteria bacterium Yellowstone B-Prime), this protein is Nitrogenase-stabilizing/protective protein NifW.